The primary structure comprises 258 residues: Acyl-[acyl-carrier-protein]--UDP-N-acetylglucosamine O-acyltransferase (258 aa).

The protein belongs to the transferase hexapeptide repeat family. LpxA subfamily. In terms of assembly, homotrimer.

It is found in the cytoplasm. It carries out the reaction a (3R)-hydroxyacyl-[ACP] + UDP-N-acetyl-alpha-D-glucosamine = a UDP-3-O-[(3R)-3-hydroxyacyl]-N-acetyl-alpha-D-glucosamine + holo-[ACP]. It functions in the pathway glycolipid biosynthesis; lipid IV(A) biosynthesis; lipid IV(A) from (3R)-3-hydroxytetradecanoyl-[acyl-carrier-protein] and UDP-N-acetyl-alpha-D-glucosamine: step 1/6. Its function is as follows. Involved in the biosynthesis of lipid A, a phosphorylated glycolipid that anchors the lipopolysaccharide to the outer membrane of the cell. This chain is Acyl-[acyl-carrier-protein]--UDP-N-acetylglucosamine O-acyltransferase, found in Halorhodospira halophila (strain DSM 244 / SL1) (Ectothiorhodospira halophila (strain DSM 244 / SL1)).